A 1480-amino-acid chain; its full sequence is C-type mannose receptor 2 (1480 aa).

An N-terminal signal peptide occupies residues 1-30 (MGPIRPALAPWPRHLLRCVLLLGGLRLGHP). The Extracellular portion of the chain corresponds to 31 to 1413 (ADSAAALLEP…SAALPENPVA (1383 aa)). In terms of domain architecture, Ricin B-type lectin spans 40–166 (PDVFLIFSQG…WNIYGSEEDL (127 aa)). Intrachain disulfides connect C53-C67 and C92-C111. Residues N101 and N139 are each glycosylated (N-linked (GlcNAc...) asparagine). In terms of domain architecture, Fibronectin type-II spans 181 to 229 (SHGKPCTIPFKYDNQWFHGCTSTGREDGHLWCATTQDYGKDERWGFCPI). 4 disulfides stabilise this stretch: C186–C212, C200–C227, C265–C358, and C334–C350. A C-type lectin 1 domain is found at 243 to 359 (LTDSCYQFNF…CSIALPYVCK (117 aa)). N363 carries an N-linked (GlcNAc...) asparagine glycan. 7 consecutive C-type lectin domains span residues 388–504 (FQGH…SICK), 527–643 (HSPS…RYIC), 677–808 (KLRH…WICK), 831–950 (FQEA…YICK), 978–1106 (FLNK…GFIC), 1131–1242 (YLNR…GAVC), and 1271–1391 (FREH…GVVC). Cystine bridges form between C409–C503, C480–C495, C617–C634, C703–C807, C784–C799, C852–C949, and C926–C941. An N-linked (GlcNAc...) asparagine glycan is attached at N1028. Residues C1077 and C1097 are joined by a disulfide bond. Residue K1141 forms a Glycyl lysine isopeptide (Lys-Gly) (interchain with G-Cter in SUMO1) linkage. A disulfide bridge links C1219 with C1233. An N-linked (GlcNAc...) asparagine glycan is attached at N1348. A disulfide bond links C1367 and C1382. Residues 1414-1434 (LVVVLTAAVLLLLALLTGALI) traverse the membrane as a helical segment. At 1435-1480 (LYRRRQSAERGSFEGARYSRSSRSGPAEATEKNILVSDMEMNEQQE) the chain is on the cytoplasmic side. Positions 1446 to 1480 (SFEGARYSRSSRSGPAEATEKNILVSDMEMNEQQE) are disordered.

As to quaternary structure, interacts directly with PLAUR/UPAR and PLAU/pro-UPA to form a tri-molecular complex. Interacts with collagen V. Interacts with C-terminal region of type I collagen/COL1A1. In terms of processing, N-glycosylated. Phosphorylated.

Its subcellular location is the cell membrane. Its function is as follows. May play a role as endocytotic lectin receptor displaying calcium-dependent lectin activity. Internalizes glycosylated ligands from the extracellular space for release in an endosomal compartment via clathrin-mediated endocytosis. May be involved in plasminogen activation system controlling the extracellular level of PLAUR/PLAU, and thus may regulate protease activity at the cell surface. May contribute to cellular uptake, remodeling and degradation of extracellular collagen matrices. May participate in remodeling of extracellular matrix cooperating with the matrix metalloproteinases (MMPs) secreted by hepatic stellate cells. May mediate endocytosis of partially degraded collagens and glycoproteins produced in the extracellular matrix by MMPs. In Rattus norvegicus (Rat), this protein is C-type mannose receptor 2 (Mrc2).